Here is a 168-residue protein sequence, read N- to C-terminus: Shikimate kinase (168 aa).

10–15 (GVGKTT) serves as a coordination point for ATP. Thr14 is a Mg(2+) binding site. 3 residues coordinate substrate: Asp32, Arg56, and Gly77. Position 115 (Arg115) interacts with ATP. Arg133 lines the substrate pocket.

Belongs to the shikimate kinase family. Monomer. It depends on Mg(2+) as a cofactor.

The protein localises to the cytoplasm. The enzyme catalyses shikimate + ATP = 3-phosphoshikimate + ADP + H(+). It participates in metabolic intermediate biosynthesis; chorismate biosynthesis; chorismate from D-erythrose 4-phosphate and phosphoenolpyruvate: step 5/7. Its function is as follows. Catalyzes the specific phosphorylation of the 3-hydroxyl group of shikimic acid using ATP as a cosubstrate. This is Shikimate kinase from Macrococcus caseolyticus (strain JCSC5402) (Macrococcoides caseolyticum).